A 454-amino-acid chain; its full sequence is UDP-N-acetylmuramoylalanine--D-glutamate ligase (454 aa).

115-121 serves as a coordination point for ATP; that stretch reads GTNGKTT.

Belongs to the MurCDEF family.

The protein localises to the cytoplasm. The catalysed reaction is UDP-N-acetyl-alpha-D-muramoyl-L-alanine + D-glutamate + ATP = UDP-N-acetyl-alpha-D-muramoyl-L-alanyl-D-glutamate + ADP + phosphate + H(+). The protein operates within cell wall biogenesis; peptidoglycan biosynthesis. Its function is as follows. Cell wall formation. Catalyzes the addition of glutamate to the nucleotide precursor UDP-N-acetylmuramoyl-L-alanine (UMA). The sequence is that of UDP-N-acetylmuramoylalanine--D-glutamate ligase from Thermoanaerobacter pseudethanolicus (strain ATCC 33223 / 39E) (Clostridium thermohydrosulfuricum).